The sequence spans 688 residues: PTS system glucoside-specific EIICBA component (688 aa).

The region spanning 3 to 427 (KKLFGQLQRI…FKLKTPGRED (425 aa)) is the PTS EIIC type-1 domain. 10 helical membrane passes run 12–32 (IGKA…LLAF), 81–101 (LGLA…YLIM), 137–157 (LVLG…MGAL), 182–202 (FVPI…SFAW), 223–243 (LTTF…LHHI), 284–304 (AFTT…AFAI), 315–335 (VVGG…ITEP), 340–360 (FLFV…TSFL), 364–384 (LLGV…ILYG), and 395–415 (LVIP…DFAI). Residues 438 to 519 (AKLPFDVLDA…AKIMSGEITK (82 aa)) enclose the PTS EIIB type-1 domain. The active-site Phosphocysteine intermediate; for EIIB activity is the Cys460. Residues 560–664 (DQVFAGKMMG…SIVTPMIITN (105 aa)) enclose the PTS EIIA type-1 domain. The Tele-phosphohistidine intermediate; for EIIA activity role is filled by His612.

It localises to the cell membrane. The phosphoenolpyruvate-dependent sugar phosphotransferase system (sugar PTS), a major carbohydrate active -transport system, catalyzes the phosphorylation of incoming sugar substrates concomitantly with their translocation across the cell membrane. This system is involved in alpha- and beta-glucoside transport. In Staphylococcus aureus (strain USA300), this protein is PTS system glucoside-specific EIICBA component (glcB).